The primary structure comprises 72 residues: Exodeoxyribonuclease 7 small subunit (72 aa).

It belongs to the XseB family. Heterooligomer composed of large and small subunits.

The protein localises to the cytoplasm. It catalyses the reaction Exonucleolytic cleavage in either 5'- to 3'- or 3'- to 5'-direction to yield nucleoside 5'-phosphates.. Its function is as follows. Bidirectionally degrades single-stranded DNA into large acid-insoluble oligonucleotides, which are then degraded further into small acid-soluble oligonucleotides. The sequence is that of Exodeoxyribonuclease 7 small subunit from Chlamydia trachomatis serovar D (strain ATCC VR-885 / DSM 19411 / UW-3/Cx).